Reading from the N-terminus, the 599-residue chain is Elongation factor 4 (599 aa).

Residues 2–184 (NYKRNFSIIA…RLVRDIPAPK (183 aa)) form the tr-type G domain. GTP contacts are provided by residues 14-19 (DHGKST) and 131-134 (NKID).

The protein belongs to the TRAFAC class translation factor GTPase superfamily. Classic translation factor GTPase family. LepA subfamily.

The protein resides in the cell membrane. The enzyme catalyses GTP + H2O = GDP + phosphate + H(+). In terms of biological role, required for accurate and efficient protein synthesis under certain stress conditions. May act as a fidelity factor of the translation reaction, by catalyzing a one-codon backward translocation of tRNAs on improperly translocated ribosomes. Back-translocation proceeds from a post-translocation (POST) complex to a pre-translocation (PRE) complex, thus giving elongation factor G a second chance to translocate the tRNAs correctly. Binds to ribosomes in a GTP-dependent manner. In Hamiltonella defensa subsp. Acyrthosiphon pisum (strain 5AT), this protein is Elongation factor 4.